Here is a 534-residue protein sequence, read N- to C-terminus: Glutamyl-tRNA(Gln) amidotransferase subunit B, mitochondrial (534 aa).

A mitochondrion-targeting transit peptide spans 1 to 28 (MTVLCRLRHCHLSTPTLCRRFHDARVYK).

It belongs to the GatB/GatE family. GatB subfamily. Subunit of the heterotrimeric GatCAB amidotransferase (AdT) complex, composed of A, B and C subunits.

The protein localises to the mitochondrion. The enzyme catalyses L-glutamyl-tRNA(Gln) + L-glutamine + ATP + H2O = L-glutaminyl-tRNA(Gln) + L-glutamate + ADP + phosphate + H(+). In terms of biological role, allows the formation of correctly charged Gln-tRNA(Gln) through the transamidation of misacylated Glu-tRNA(Gln) in the mitochondria. The reaction takes place in the presence of glutamine and ATP through an activated gamma-phospho-Glu-tRNA(Gln). This Laccaria bicolor (strain S238N-H82 / ATCC MYA-4686) (Bicoloured deceiver) protein is Glutamyl-tRNA(Gln) amidotransferase subunit B, mitochondrial.